We begin with the raw amino-acid sequence, 452 residues long: Nebulette (452 aa).

The tract at residues 1-26 (MKVPVSGDVKEETEEENVEQEENQEA) is disordered. Acidic residues predominate over residues 11 to 23 (EETEEENVEQEEN). 12 Nebulin repeats span residues 29–63 (SLKPVIEDLSMELARKCTELISDIHYKEEYKKSKD), 64–98 (KCTFVTDTPMLNHVKNIGAFISEAKYKGTIKADLS), 101–135 (LYKDMPATIDSVFAREVSQLQSEVAYKQKHEAEKG), 138–172 (DYTHMKEPPEVRRAMEVNRHQSNISYRKDMQGTHT), 173–199 (YTAELDRPDIKKATQISKIISDAEYKK), 206–240 (KEPSVIGRPDFEHAVGASKLSSQVKYKEKFDNEMK), 263–278 (LASDWEYKRDFEENKG), 279–313 (LYHFDAEAPEHLHHKGNATLQSQVKYREEYEKNKG), 315–349 (SMLEFVETPSYQSSKEAQKMQSEKVYKEDFEKEIK), 352–386 (SSLDLDKTPAFLHVKHITNLMREKEYKKDLENEIK), 389–423 (GMELSSEVLDIQRAKRASEMASEKDYKRDLETEIK), and 426–452 (GMQVSTDTLDVQRAKRASEMASQVRMV).

As to quaternary structure, interacts (via nebulin repeats 1-5) with DESM (via rod region). Interacts (via SH3 domain) with XIRP2.

It localises to the cytoplasm. In terms of biological role, binds to actin and plays an important role in the assembly of the Z-disk. May functionally link sarcomeric actin to the desmin intermediate filaments in the heart muscle sarcomeres. Isoform 2 might play a role in the assembly of focal adhesion. The polypeptide is Nebulette (Nebl) (Mus musculus (Mouse)).